The following is a 129-amino-acid chain: Flagellar assembly factor FliW 2 (129 aa).

The protein belongs to the FliW family. In terms of assembly, interacts with translational regulator CsrA and flagellin(s).

Its subcellular location is the cytoplasm. In terms of biological role, acts as an anti-CsrA protein, binds CsrA and prevents it from repressing translation of its target genes, one of which is flagellin. Binds to flagellin and participates in the assembly of the flagellum. The polypeptide is Flagellar assembly factor FliW 2 (Helicobacter pylori (strain HPAG1)).